Here is a 78-residue protein sequence, read N- to C-terminus: MSDTADRVQKIVVEHLGVEADKVNQEASFIDDLGADSLDIVELVMAFEEEFGVEIPDDAAEKISTVGDATKYIEEHKG.

The region spanning 2–77 (SDTADRVQKI…DATKYIEEHK (76 aa)) is the Carrier domain. Ser-37 bears the O-(pantetheine 4'-phosphoryl)serine mark.

Belongs to the acyl carrier protein (ACP) family. 4'-phosphopantetheine is transferred from CoA to a specific serine of apo-ACP by AcpS. This modification is essential for activity because fatty acids are bound in thioester linkage to the sulfhydryl of the prosthetic group.

Its subcellular location is the cytoplasm. It functions in the pathway lipid metabolism; fatty acid biosynthesis. Its function is as follows. Carrier of the growing fatty acid chain in fatty acid biosynthesis. This Erythrobacter litoralis (strain HTCC2594) protein is Acyl carrier protein.